The sequence spans 70 residues: Large ribosomal subunit protein bL31 (70 aa).

Zn(2+) is bound by residues C16, C18, C36, and C39.

The protein belongs to the bacterial ribosomal protein bL31 family. Type A subfamily. As to quaternary structure, part of the 50S ribosomal subunit. It depends on Zn(2+) as a cofactor.

Its function is as follows. Binds the 23S rRNA. The protein is Large ribosomal subunit protein bL31 of Fervidobacterium nodosum (strain ATCC 35602 / DSM 5306 / Rt17-B1).